The primary structure comprises 1076 residues: Protein EXPORTIN 1B (1076 aa).

In terms of domain architecture, Importin N-terminal spans 37 to 103 (ADNILRDLKA…KNYISDVIVQ (67 aa)). HEAT repeat units follow at residues 135 to 171 (AKWK…EVFD), 232 to 267 (IFES…LNFG), 282 to 319 (MNQL…FFTS), 475 to 514 (DTEK…SMVV), 564 to 601 (KFLK…KCKR), 613 to 650 (PFVS…AESD), 683 to 720 (LKEP…IFLD), 757 to 794 (REIL…DYAR), 799 to 836 (ARES…CTLE), 895 to 935 (ETGL…VLTD), and 943 to 988 (KLHV…YTTK).

It belongs to the exportin family. In terms of tissue distribution, present in mature pollen grains, unpollinated pistils, and 2-week-old seedlings.

The protein localises to the nucleus. It localises to the nuclear pore complex. Its subcellular location is the nucleus membrane. In terms of biological role, receptor for the leucine-rich nuclear export signal (NES). Binds cooperatively to the NES on its target protein and to the small GTPase Ran in its active GTP-bound form. Required for the maternal-to-embryonic transition and during gametophyte development. The protein is Protein EXPORTIN 1B of Arabidopsis thaliana (Mouse-ear cress).